A 525-amino-acid chain; its full sequence is GMP synthase [glutamine-hydrolyzing] (525 aa).

Residues 9 to 207 (RILILDFGSQ…VRDICQCEAL (199 aa)) enclose the Glutamine amidotransferase type-1 domain. The Nucleophile role is filled by Cys86. Catalysis depends on residues His181 and Glu183. The 193-residue stretch at 208–400 (WTPAKIIDDA…LGLPYDMLYR (193 aa)) folds into the GMPS ATP-PPase domain. Position 235 to 241 (235 to 241 (SGGVDSS)) interacts with ATP.

As to quaternary structure, homodimer.

The enzyme catalyses XMP + L-glutamine + ATP + H2O = GMP + L-glutamate + AMP + diphosphate + 2 H(+). The protein operates within purine metabolism; GMP biosynthesis; GMP from XMP (L-Gln route): step 1/1. Its function is as follows. Catalyzes the synthesis of GMP from XMP. The chain is GMP synthase [glutamine-hydrolyzing] from Escherichia coli O8 (strain IAI1).